Consider the following 218-residue polypeptide: Small ribosomal subunit protein uS3c (218 aa).

One can recognise a KH type-2 domain in the interval 47 to 118 (VQKNIRISSG…KLNIAITRIS (72 aa)).

The protein belongs to the universal ribosomal protein uS3 family. In terms of assembly, part of the 30S ribosomal subunit.

The protein localises to the plastid. Its subcellular location is the chloroplast. The sequence is that of Small ribosomal subunit protein uS3c (rps3) from Nasturtium officinale (Watercress).